The primary structure comprises 247 residues: MENVRAYGAGLAGANFDKNTFFKKPTVLFRCAALLFGLILWYSVSKGGWHKPSDAIHPVCLYGRSSSTCSFATAVGFFAVCGAIVLIVLDAKMDQISSVPTRRRAVLADLVVSAIFTAIFLIGFFTFWSKLSAFEVDEDDENPIKTNNAKFGILSALLSFLAWGGAAFFAWRRYEEGNQATHEPNYDEHFGQVSTDVQDGYGYGGDSTGIGHVGAPPPQSSYQSGAAPQTMQQPPSNPYTQSEGYGY.

The region spanning 21–175 (FFKKPTVLFR…AAFFAWRRYE (155 aa)) is the MARVEL domain. 4 helical membrane-spanning segments follow: residues 25–45 (PTVLFRCAALLFGLILWYSVS), 69–89 (CSFATAVGFFAVCGAIVLIVL), 105–125 (AVLADLVVSAIFTAIFLIGFF), and 151–171 (FGILSALLSFLAWGGAAFFAW). A disordered region spans residues 206–247 (DSTGIGHVGAPPPQSSYQSGAAPQTMQQPPSNPYTQSEGYGY). The segment covering 220 to 247 (SSYQSGAAPQTMQQPPSNPYTQSEGYGY) has biased composition (polar residues).

This sequence belongs to the synaptogyrin family. Expressed in a wide variety of neurons and is expressed weakly in the non-neuronal distal tip cells. A punctate pattern was observed in the ventral and dorsal nerve cords and the nerve ring. Weak expression is seen in neuronal cell bodies and commissures.

It localises to the membrane. The polypeptide is Synaptogyrin homolog 1 (sng-1) (Caenorhabditis elegans).